We begin with the raw amino-acid sequence, 247 residues long: MVDKIMNSTANLLFDFAEVSVGQHYYWQIGEYSVHGQVLMTSWFVFAVIAILSIAGNRDLKAIPEGLQNLTEYITEFIRDLAKTQIGEEEYVKWIPFLGTLFLFIFVSNWSGALIPWHIFEIPNGELAAPTNDINTTVALALLTSTAYFYAGFSKKGLGYFKRYVSPAAFLLPINVLEDFTKPLSLSFRLFGNILADELVVGVLVALVPLVVPIPIMLLGLFTSGIQALVFATLAGAYIGESIEDHH.

The next 5 helical transmembrane spans lie at Gly-36–Gly-56, Ile-95–Ile-115, Ile-134–Ser-154, Leu-199–Leu-219, and Gly-220–Gly-240.

It belongs to the ATPase A chain family. As to quaternary structure, F-type ATPases have 2 components, CF(1) - the catalytic core - and CF(0) - the membrane proton channel. CF(1) has five subunits: alpha(3), beta(3), gamma(1), delta(1), epsilon(1). CF(0) has four main subunits: a, b, b' and c.

It is found in the plastid. It localises to the chloroplast thylakoid membrane. Its function is as follows. Key component of the proton channel; it plays a direct role in the translocation of protons across the membrane. The chain is ATP synthase subunit a, chloroplastic from Tupiella akineta (Green alga).